We begin with the raw amino-acid sequence, 192 residues long: Imidazoleglycerol-phosphate dehydratase (192 aa).

Belongs to the imidazoleglycerol-phosphate dehydratase family.

It is found in the cytoplasm. It carries out the reaction D-erythro-1-(imidazol-4-yl)glycerol 3-phosphate = 3-(imidazol-4-yl)-2-oxopropyl phosphate + H2O. It participates in amino-acid biosynthesis; L-histidine biosynthesis; L-histidine from 5-phospho-alpha-D-ribose 1-diphosphate: step 6/9. This chain is Imidazoleglycerol-phosphate dehydratase, found in Staphylococcus epidermidis (strain ATCC 12228 / FDA PCI 1200).